Consider the following 502-residue polypeptide: Glucose-6-phosphate isomerase (502 aa).

E331 (proton donor) is an active-site residue. Catalysis depends on residues H362 and K471.

This sequence belongs to the GPI family.

It localises to the cytoplasm. It catalyses the reaction alpha-D-glucose 6-phosphate = beta-D-fructose 6-phosphate. The protein operates within carbohydrate biosynthesis; gluconeogenesis. It participates in carbohydrate degradation; glycolysis; D-glyceraldehyde 3-phosphate and glycerone phosphate from D-glucose: step 2/4. Catalyzes the reversible isomerization of glucose-6-phosphate to fructose-6-phosphate. The sequence is that of Glucose-6-phosphate isomerase from Xylella fastidiosa (strain 9a5c).